Reading from the N-terminus, the 338-residue chain is Anthranilate phosphoribosyltransferase (338 aa).

Residues G81, 84-85 (GD), T89, 91-94 (NIST), 109-117 (KHGNRSMVS), and S121 contribute to the 5-phospho-alpha-D-ribose 1-diphosphate site. Residue G81 participates in anthranilate binding. S93 is a Mg(2+) binding site. N112 contributes to the anthranilate binding site. R167 is an anthranilate binding site. Mg(2+) contacts are provided by D226 and E227.

It belongs to the anthranilate phosphoribosyltransferase family. As to quaternary structure, homodimer. Requires Mg(2+) as cofactor.

It carries out the reaction N-(5-phospho-beta-D-ribosyl)anthranilate + diphosphate = 5-phospho-alpha-D-ribose 1-diphosphate + anthranilate. Its pathway is amino-acid biosynthesis; L-tryptophan biosynthesis; L-tryptophan from chorismate: step 2/5. In terms of biological role, catalyzes the transfer of the phosphoribosyl group of 5-phosphorylribose-1-pyrophosphate (PRPP) to anthranilate to yield N-(5'-phosphoribosyl)-anthranilate (PRA). The protein is Anthranilate phosphoribosyltransferase of Acidithiobacillus ferrooxidans (strain ATCC 23270 / DSM 14882 / CIP 104768 / NCIMB 8455) (Ferrobacillus ferrooxidans (strain ATCC 23270)).